Here is a 185-residue protein sequence, read N- to C-terminus: Elongation factor P (185 aa).

It belongs to the elongation factor P family.

It is found in the cytoplasm. Its pathway is protein biosynthesis; polypeptide chain elongation. Involved in peptide bond synthesis. Stimulates efficient translation and peptide-bond synthesis on native or reconstituted 70S ribosomes in vitro. Probably functions indirectly by altering the affinity of the ribosome for aminoacyl-tRNA, thus increasing their reactivity as acceptors for peptidyl transferase. The protein is Elongation factor P of Thermotoga petrophila (strain ATCC BAA-488 / DSM 13995 / JCM 10881 / RKU-1).